An 84-amino-acid chain; its full sequence is uncharacterized protein (84 aa).

The helical transmembrane segment at 25-45 (ILMTVAGFIIAFAILVFQISF) threads the bilayer.

Its subcellular location is the membrane. This is an uncharacterized protein from Bacillus anthracis.